Here is a 1279-residue protein sequence, read N- to C-terminus: Amylopullulanase (1279 aa).

An N-terminal signal peptide occupies residues 1 to 35; that stretch reads MYKKLFTKKFISFVMSLLLVLTAAFSSMPFHNVYA. Positions 248, 250, 288, 343, 401, 403, 406, 407, 452, and 454 each coordinate Ca(2+). Substrate-binding residues include histidine 527 and arginine 627. Aspartate 629 serves as the catalytic Nucleophile. The active-site Proton donor is the glutamate 658. Substrate contacts are provided by residues 734–735, aspartate 794, and arginine 798; that span reads HD. 2 consecutive Fibronectin type-III domains span residues 930-1022 and 1158-1252; these read APQV…AYPI and KPTA…VVPI.

This sequence belongs to the glycosyl hydrolase 13 family. The cofactor is Ca(2+).

It catalyses the reaction Endohydrolysis of (1-&gt;4)-alpha-D-glucosidic linkages in polysaccharides containing three or more (1-&gt;4)-alpha-linked D-glucose units.. It carries out the reaction Hydrolysis of (1-&gt;6)-alpha-D-glucosidic linkages in pullulan, amylopectin and glycogen, and in the alpha- and beta-limit dextrins of amylopectin and glycogen.. The sequence is that of Amylopullulanase (apu) from Thermoanaerobacterium saccharolyticum.